Reading from the N-terminus, the 1622-residue chain is WD repeat-containing protein 97 (1622 aa).

WD repeat units lie at residues 187–233 (SEQG…RRLV), 290–329 (LHKTTISDLAYCEEVEAMVTASRDSTVKVWEADWQIRMVF), 331–370 (GHTGPVTAMTVLPNTTLVLSASQDGTLRTWDLQAAAQVGE), 552–592 (ELRC…TVFQ), 594–633 (EAHSPGPVVAIASTWNSIVSSGGDLTVKMWRVFPYAEESL), and 687–726 (DPTDHITGLCCCPTLKLYACSSLDCTVRIWTAENRLLRLL). 2 disordered regions span residues 1090–1112 (GEKPGEEGEEDKKEEEEEKEDEE) and 1453–1472 (LHPAGPAQLPGEPPPLEETD). A coiled-coil region spans residues 1094–1118 (GEEGEEDKKEEEEEKEDEELDWALA). The span at 1096 to 1112 (EGEEDKKEEEEEKEDEE) shows a compositional bias: acidic residues.

This Homo sapiens (Human) protein is WD repeat-containing protein 97.